Here is a 164-residue protein sequence, read N- to C-terminus: MPTKIAVYPGSFDPITYGHLDIIDRALRIFDQVIVAVARNSAKSALFTTDERVDMIQRVLADNVRARVDTFDGLLIDYVLSQKATVIIRGLRAISDFEYEFQIAQMNRSISQDVETLFMMTSVPYGYLSSSIVKEVSSLNGPIDGLVPPLVRQALRDKFAGPDR.

Residue Ser-11 coordinates substrate. ATP is bound by residues 11–12 and His-19; that span reads SF. Residues Lys-43, Leu-75, and Arg-89 each coordinate substrate. ATP is bound by residues 90 to 92, Glu-100, and 125 to 131; these read GLR and YGYLSSS.

The protein belongs to the bacterial CoaD family. As to quaternary structure, homohexamer. Mg(2+) serves as cofactor.

It localises to the cytoplasm. The enzyme catalyses (R)-4'-phosphopantetheine + ATP + H(+) = 3'-dephospho-CoA + diphosphate. It functions in the pathway cofactor biosynthesis; coenzyme A biosynthesis; CoA from (R)-pantothenate: step 4/5. Functionally, reversibly transfers an adenylyl group from ATP to 4'-phosphopantetheine, yielding dephospho-CoA (dPCoA) and pyrophosphate. The protein is Phosphopantetheine adenylyltransferase of Geobacter sulfurreducens (strain ATCC 51573 / DSM 12127 / PCA).